The primary structure comprises 83 residues: RNA-binding protein Hfq (83 aa).

The 60-residue stretch at 9–68 folds into the Sm domain; the sequence is DPYLNALRKERIPVSIFLVNGIKLQGQIESFDQFVILLKNTVSQMVYKHAISTVVPARNV.

Belongs to the Hfq family. Homohexamer.

RNA chaperone that binds small regulatory RNA (sRNAs) and mRNAs to facilitate mRNA translational regulation in response to envelope stress, environmental stress and changes in metabolite concentrations. Also binds with high specificity to tRNAs. The sequence is that of RNA-binding protein Hfq from Marinobacter nauticus (strain ATCC 700491 / DSM 11845 / VT8) (Marinobacter aquaeolei).